We begin with the raw amino-acid sequence, 153 residues long: UPF0260 protein Plav_0898 (153 aa).

It belongs to the UPF0260 family.

This Parvibaculum lavamentivorans (strain DS-1 / DSM 13023 / NCIMB 13966) protein is UPF0260 protein Plav_0898.